A 247-amino-acid polypeptide reads, in one-letter code: Cobalt transport protein CbiM (247 aa).

The signal sequence occupies residues 1–21 (MVGWGVLILLMVLWLPRQAYA). 7 consecutive transmembrane segments (helical) span residues 27-47 (GYLP…ALIL), 64-84 (LVLA…LPSV), 96-116 (LGAV…ILLF), 119-139 (LLLA…MAVV), 159-179 (GVAV…TTSL), 181-201 (LALA…KFAS), and 202-222 (IFAV…VIMV).

Belongs to the CbiM family. Forms an energy-coupling factor (ECF) transporter complex composed of an ATP-binding protein (A component, CbiO), a transmembrane protein (T component, CbiQ) and 2 possible substrate-capture proteins (S components, CbiM and CbiN) of unknown stoichimetry.

The protein localises to the cell membrane. Its pathway is cofactor biosynthesis; adenosylcobalamin biosynthesis. Its function is as follows. Part of the energy-coupling factor (ECF) transporter complex CbiMNOQ involved in cobalt import. The polypeptide is Cobalt transport protein CbiM (Kyrpidia tusciae (strain DSM 2912 / NBRC 15312 / T2) (Bacillus tusciae)).